The chain runs to 193 residues: Cysteine and glycine-rich protein 1 (193 aa).

Residues 10–61 (CGVCQKTVYFAEEVQCEGNSFHKSCFLCMVCKKNLDSTTVAVHGEEIYCKSC) form the LIM zinc-binding 1 domain. Positions 64–69 (KKYGPK) match the Nuclear localization signal motif. Phosphoserine is present on S81. The residue at position 84 (K84) is an N6-acetyllysine. K91 is covalently cross-linked (Glycyl lysine isopeptide (Lys-Gly) (interchain with G-Cter in SUMO2)). 4 positions are modified to N6-acetyllysine: K112, K131, K137, and K161. An LIM zinc-binding 2 domain is found at 119–170 (CPRCSQAVYAAEKVIGAGKSWHKSCFRCAKCGKGLESTTLADKDGEIYCKGC). S192 carries the phosphoserine modification.

In terms of assembly, interacts with ASCC1; ASCC2 and TRIP4.

It is found in the nucleus. In terms of biological role, could play a role in neuronal development. The sequence is that of Cysteine and glycine-rich protein 1 (Csrp1) from Rattus norvegicus (Rat).